An 89-amino-acid polypeptide reads, in one-letter code: MAMTAAQKAEIVKGFQRAEGDTGSSEVQIALLTARINDLTPHFKANTKDHHSRRGLLKLVSRRRRLLDYLKRTDAEGYRALITRLGLRK.

The protein belongs to the universal ribosomal protein uS15 family. In terms of assembly, part of the 30S ribosomal subunit. Forms a bridge to the 50S subunit in the 70S ribosome, contacting the 23S rRNA.

One of the primary rRNA binding proteins, it binds directly to 16S rRNA where it helps nucleate assembly of the platform of the 30S subunit by binding and bridging several RNA helices of the 16S rRNA. Functionally, forms an intersubunit bridge (bridge B4) with the 23S rRNA of the 50S subunit in the ribosome. The chain is Small ribosomal subunit protein uS15 from Chromobacterium violaceum (strain ATCC 12472 / DSM 30191 / JCM 1249 / CCUG 213 / NBRC 12614 / NCIMB 9131 / NCTC 9757 / MK).